Here is a 909-residue protein sequence, read N- to C-terminus: WD repeat-containing protein 20 homolog (909 aa).

The segment at 58–132 is disordered; the sequence is SPAQGKLGSD…SAGNNTVEAR (75 aa). 2 stretches are compositionally biased toward low complexity: residues 80–107 and 115–127; these read GANT…AISN and SHSN…AGNN. WD repeat units lie at residues 248–288, 321–362, 363–402, and 470–517; these read IDKT…AATA, TDNC…GIAR, SYFG…VVAR, and ADRN…LRHP. Disordered stretches follow at residues 458–483, 554–628, 661–699, 720–739, and 749–775; these read FEGF…FRSD, SGQA…AGSV, SDSI…NSGS, SEKK…RQHR, and NQHN…GHSS. 2 stretches are compositionally biased toward polar residues: residues 555 to 569 and 595 to 606; these read GQAT…SCSP and TANCTISSQSSP. 2 stretches are compositionally biased toward low complexity: residues 612–628 and 673–699; these read EAAT…AGSV and GQRP…NSGS. The stretch at 856–893 is one WD 5 repeat; that stretch reads IAHERLTALIFREDCFLTACQDGFIYTWARPGHATHAT.

Component of the Usp12-46 deubiquitylase complex consisting of Usp12-46, Wdr20 and Uaf1; regulatory subunit that, together with Uaf1, stabilizes Usp12-46. The Usp12-46 deubiquitylase complex associates with arr/arrow; the interaction leads to deubiquitination and stabilization of arr/arrow.

Functionally, regulatory component of the Usp12-46 deubiquitylase complex. This complex deubiquitylates the wg/wingless-signaling receptor arr/arrow, which stabilizes the receptor and increases its concentration at the cell surface; this enhances the sensitivity of cells to wg/wingless-signal stimulation. This increases the amplitude and spatial range of the signaling response to the wg/wingless morphogen gradient, facilitating the precise concentration-dependent regulation of its target genes. Required for wg/wingless-mediated signaling in the wing imaginal disc and for wg/wingless-dependent regulation of intestinal stem cell proliferation. This chain is WD repeat-containing protein 20 homolog, found in Drosophila melanogaster (Fruit fly).